We begin with the raw amino-acid sequence, 335 residues long: 2-acylglycerol O-acyltransferase 1 (335 aa).

The next 2 membrane-spanning stretches (helical) occupy residues 18–38 (TVAV…SIGI) and 40–60 (VMLI…WLYF). N-linked (GlcNAc...) asparagine glycans are attached at residues Asn121 and Asn125. A helical membrane pass occupies residues 132 to 152 (LFPGFTSYLHVLPLWFWCPVF). Asn180 carries N-linked (GlcNAc...) asparagine glycosylation.

This sequence belongs to the diacylglycerol acyltransferase family. Expressed in stomach and liver.

Its subcellular location is the endoplasmic reticulum membrane. It carries out the reaction a 2-acylglycerol + an acyl-CoA = a 1,2-diacylglycerol + CoA. The enzyme catalyses 2-(9Z-octadecenoyl)-glycerol + butanoyl-CoA = 1-butanoyl-2-(9Z-octadecenoyl)-glycerol + CoA. It catalyses the reaction 2-(9Z-octadecenoyl)-glycerol + octanoyl-CoA = 1-octanoyl-2-(9Z-octadecenoyl)-glycerol + CoA. The catalysed reaction is 2-(9Z-octadecenoyl)-glycerol + dodecanoyl-CoA = 1-dodecanoyl-2-(9Z-octadecenoyl)-glycerol + CoA. It carries out the reaction 2-(9Z-octadecenoyl)-glycerol + tetradecanoyl-CoA = 1-tetradecanoyl-2-(9Z-octadecenoyl)-glycerol + CoA. The enzyme catalyses 2-(9Z-octadecenoyl)-glycerol + hexadecanoyl-CoA = 1-hexadecanoyl-2-(9Z-octadecenoyl)-glycerol + CoA. It catalyses the reaction 2-(9Z-octadecenoyl)-glycerol + octadecanoyl-CoA = 1-octadecanoyl-2-(9Z-octadecenoyl)-glycerol + CoA. The catalysed reaction is eicosanoyl-CoA + 2-(9Z-octadecenoyl)-glycerol = 1-eicosanoyl-2-(9Z-octadecenoyl)-glycerol + CoA. It carries out the reaction 2-(9Z-octadecenoyl)-glycerol + (9Z)-octadecenoyl-CoA = 1,2-di-(9Z-octadecenoyl)-glycerol + CoA. The enzyme catalyses 2-(9Z-octadecenoyl)-glycerol + (9Z,12Z)-octadecadienoyl-CoA = 1-(9Z,12Z-octadecadienoyl)-2-(9Z-octadecenoyl)-glycerol + CoA. It catalyses the reaction 2-(9Z-octadecenoyl)-glycerol + (5Z,8Z,11Z,14Z)-eicosatetraenoyl-CoA = 1-(5Z,8Z,11Z,14Z-eicosatetraenoyl)-2-(9Z-octadecenoyl)-glycerol + CoA. The catalysed reaction is a 2-acylglycerol + an acyl-CoA = a 1,2-diacyl-sn-glycerol + CoA. It carries out the reaction a 2-acylglycerol + an acyl-CoA = a 2,3-diacyl-sn-glycerol + CoA. The enzyme catalyses a 1-acylglycerol + an acyl-CoA = a 1,2-diacylglycerol + CoA. It catalyses the reaction 1-dodecanoylglycerol + (9Z)-octadecenoyl-CoA = 1-dodecanoyl-2-(9Z-octadecenoyl)-glycerol + CoA. The catalysed reaction is 1-tetradecanoylglycerol + (9Z)-octadecenoyl-CoA = 1-tetradecanoyl-2-(9Z-octadecenoyl)-glycerol + CoA. It carries out the reaction 1-hexadecanoylglycerol + (9Z)-octadecenoyl-CoA = 1-hexadecanoyl-2-(9Z-octadecenoyl)-glycerol + CoA. The enzyme catalyses 1-(9Z-octadecenoyl)-glycerol + (9Z)-octadecenoyl-CoA = 1,2-di-(9Z-octadecenoyl)-glycerol + CoA. It catalyses the reaction 1-(9Z,12Z-octadecadienoyl)-glycerol + (9Z)-octadecenoyl-CoA = 1-(9Z,12Z-octadecadienoyl)-2-(9Z-octadecenoyl)-glycerol + CoA. The catalysed reaction is 1-(9Z,12Z,15Z-octadecatrienoyl)-glycerol + (9Z)-octadecenoyl-CoA = 1-(9Z,12Z,15Z-octadecatrienoyl)-2-(9Z-octadecenoyl)-glycerol + CoA. It carries out the reaction 1-(5Z,8Z,11Z,14Z-eicosatetraenoyl)-glycerol + (9Z)-octadecenoyl-CoA = 1-(5Z,8Z,11Z,14Z-eicosatetraenoyl)-2-(9Z-octadecenoyl)-glycerol + CoA. The enzyme catalyses a 1-acylglycerol + an acyl-CoA = a 1,3-diacylglycerol + CoA. It catalyses the reaction 1-dodecanoylglycerol + (9Z)-octadecenoyl-CoA = 1-dodecanoyl-3-(9Z-octadecenoyl)-glycerol + CoA. The catalysed reaction is 1-hexadecanoylglycerol + (9Z)-octadecenoyl-CoA = 1-(9Z-octadecenoyl)-3-hexadecanoylglycerol + CoA. It carries out the reaction 1-octadecanoylglycerol + (9Z)-octadecenoyl-CoA = 1-octadecanoyl-3-(9Z-octadecenoyl)-glycerol + CoA. The enzyme catalyses 1-(9Z-octadecenoyl)-sn-glycerol + (9Z)-octadecenoyl-CoA = 1,3-di-(9Z-octadecenoyl)-glycerol + CoA. It catalyses the reaction 1-(9Z,12Z-octadecadienoyl)-glycerol + (9Z)-octadecenoyl-CoA = 1-(9Z-octadecenoyl)-3-(9Z,12Z-octadecadienoyl)-glycerol + CoA. The catalysed reaction is 1-(9Z,12Z,15Z-octadecatrienoyl)-glycerol + (9Z)-octadecenoyl-CoA = 1-(9Z,12Z,15Z-octadecatrienoyl)-3-(9Z-octadecenoyl)-glycerol + CoA. It carries out the reaction a 1-acyl-sn-glycerol + an acyl-CoA = a 1,3-diacyl-sn-glycerol + CoA. The enzyme catalyses a 3-acyl-sn-glycerol + an acyl-CoA = a 1,3-diacyl-sn-glycerol + CoA. It catalyses the reaction 3-octadecanoyl-sn-glycerol + (9Z)-octadecenoyl-CoA = 1-(9Z-octadecenoyl)-3-octadecanoyl-sn-glycerol + CoA. It functions in the pathway glycerolipid metabolism; triacylglycerol biosynthesis. Involved in glycerolipid synthesis and lipid metabolism. Catalyzes the formation of diacylglycerol, the precursor of triacylglycerol, by transferring the acyl chain of a fatty acyl-CoA to a monoacylglycerol, mainly at the sn-1 or sn-3 positions. It uses both sn-2-monoacylglycerol (2-acylglycerol) and sn-1-monoacylglycerol (1-acyl-sn-glycerol) equally well as substrates, and uses sn-3-monoacylglycerol (3-acyl-sn-glycerol) with lower efficiency. Probably not involved in absorption of dietary fat in the small intestine. This is 2-acylglycerol O-acyltransferase 1 from Homo sapiens (Human).